Here is a 214-residue protein sequence, read N- to C-terminus: Probable transaldolase (214 aa).

Lys83 acts as the Schiff-base intermediate with substrate in catalysis.

This sequence belongs to the transaldolase family. Type 3B subfamily.

The protein localises to the cytoplasm. It catalyses the reaction D-sedoheptulose 7-phosphate + D-glyceraldehyde 3-phosphate = D-erythrose 4-phosphate + beta-D-fructose 6-phosphate. It participates in carbohydrate degradation; pentose phosphate pathway; D-glyceraldehyde 3-phosphate and beta-D-fructose 6-phosphate from D-ribose 5-phosphate and D-xylulose 5-phosphate (non-oxidative stage): step 2/3. In terms of biological role, transaldolase is important for the balance of metabolites in the pentose-phosphate pathway. The polypeptide is Probable transaldolase (Geobacter sp. (strain M21)).